A 118-amino-acid chain; its full sequence is UPF0449 protein C19orf25 homolog (118 aa).

Tyr63 bears the Phosphotyrosine mark. The stretch at 69-105 forms a coiled coil; sequence YVAMNQRLQQAGAQLEQKRADLQQAGEELERDISQVG.

It belongs to the UPF0449 family.

The protein is UPF0449 protein C19orf25 homolog of Bos taurus (Bovine).